We begin with the raw amino-acid sequence, 431 residues long: 3-phosphoshikimate 1-carboxyvinyltransferase (431 aa).

Residues lysine 20, serine 21, and arginine 25 each contribute to the 3-phosphoshikimate site. Lysine 20 serves as a coordination point for phosphoenolpyruvate. Phosphoenolpyruvate contacts are provided by glycine 91 and arginine 119. 3-phosphoshikimate contacts are provided by serine 164, glutamine 166, aspartate 317, and lysine 344. A phosphoenolpyruvate-binding site is contributed by glutamine 166. Aspartate 317 serves as the catalytic Proton acceptor. 2 residues coordinate phosphoenolpyruvate: arginine 348 and arginine 390.

It belongs to the EPSP synthase family. In terms of assembly, monomer.

The protein resides in the cytoplasm. The catalysed reaction is 3-phosphoshikimate + phosphoenolpyruvate = 5-O-(1-carboxyvinyl)-3-phosphoshikimate + phosphate. The protein operates within metabolic intermediate biosynthesis; chorismate biosynthesis; chorismate from D-erythrose 4-phosphate and phosphoenolpyruvate: step 6/7. Its function is as follows. Catalyzes the transfer of the enolpyruvyl moiety of phosphoenolpyruvate (PEP) to the 5-hydroxyl of shikimate-3-phosphate (S3P) to produce enolpyruvyl shikimate-3-phosphate and inorganic phosphate. The polypeptide is 3-phosphoshikimate 1-carboxyvinyltransferase (Aquifex aeolicus (strain VF5)).